The chain runs to 355 residues: uncharacterized protein (355 aa).

Residues 1-104 (MGTKGLPLYP…EQAKTVQGGR (104 aa)) are disordered. At K19 the chain carries N6-acetyllysine. Positions 45-54 (EEGTDLEGDM) are enriched in acidic residues. A Phosphoserine modification is found at S175. Disordered regions lie at residues 247 to 310 (PRGS…AAYK) and 325 to 355 (SITS…GKKP). Y293 is modified (phosphotyrosine). S294 is modified (phosphoserine). Residues 325–334 (SITSLSSRTT) are compositionally biased toward polar residues. Over residues 336 to 348 (LPAADPFALAPFP) the composition is skewed to low complexity.

This is an uncharacterized protein from Homo sapiens (Human).